We begin with the raw amino-acid sequence, 472 residues long: Chromosomal replication initiator protein DnaA (472 aa).

The domain I, interacts with DnaA modulators stretch occupies residues methionine 1–glutamate 73. The tract at residues glutamate 73 to serine 128 is domain II. A disordered region spans residues proline 90–alanine 124. Residues glutamate 99–alanine 109 show a composition bias toward basic and acidic residues. Polar residues predominate over residues glutamate 110–serine 119. The interval proline 129 to serine 351 is domain III, AAA+ region. ATP is bound by residues glycine 176, glycine 178, lysine 179, and threonine 180. A domain IV, binds dsDNA region spans residues lysine 352–glutamate 472.

Belongs to the DnaA family. Oligomerizes as a right-handed, spiral filament on DNA at oriC.

The protein resides in the cytoplasm. Its function is as follows. Plays an essential role in the initiation and regulation of chromosomal replication. ATP-DnaA binds to the origin of replication (oriC) to initiate formation of the DNA replication initiation complex once per cell cycle. Binds the DnaA box (a 9 base pair repeat at the origin) and separates the double-stranded (ds)DNA. Forms a right-handed helical filament on oriC DNA; dsDNA binds to the exterior of the filament while single-stranded (ss)DNA is stabiized in the filament's interior. The ATP-DnaA-oriC complex binds and stabilizes one strand of the AT-rich DNA unwinding element (DUE), permitting loading of DNA polymerase. After initiation quickly degrades to an ADP-DnaA complex that is not apt for DNA replication. Binds acidic phospholipids. The sequence is that of Chromosomal replication initiator protein DnaA from Rhodopseudomonas palustris (strain ATCC BAA-98 / CGA009).